The sequence spans 558 residues: INCREASED PETAL GROWTH ANISOTROPY 1-like protein 2 (558 aa).

Residues 1 to 15 show a composition bias toward low complexity; the sequence is MSRISTTSTTPSRVR. The interval 1-54 is disordered; the sequence is MSRISTTSTTPSRVRAANSHYSVISKPRAQDDNGLTGGKPKSSGYDVKNDPAKR. Residues 104–180 are a coiled coil; sequence VMATAAAEDE…EAKISSLSSN (77 aa). The segment at 207–285 is disordered; it reads KVKKEVAVES…AARAQKSPPV (79 aa). Pro residues-rich tracts occupy residues 221 to 236 and 256 to 272; these read PPSP…PPLP and FAPP…PPRP. Residues 392 to 448 adopt a coiled-coil conformation; that stretch reads KADTLQEAAVEYRELKKLEKELSSYSDDPNIHYGVALKKMANLLDKSEQRIRRLVRL.

The protein belongs to the IPGA1 family.

It is found in the cytoplasm. The protein resides in the cytoskeleton. Functionally, microtubule-associated protein probably involved in the regulation of microtubule organization. This is INCREASED PETAL GROWTH ANISOTROPY 1-like protein 2 from Arabidopsis thaliana (Mouse-ear cress).